The following is a 524-amino-acid chain: 2-isopropylmalate synthase (524 aa).

Residues Val-15–His-275 enclose the Pyruvate carboxyltransferase domain. Mn(2+) contacts are provided by Asp-24, His-212, His-214, and Asn-248. The tract at residues Arg-401–Phe-524 is regulatory domain.

Belongs to the alpha-IPM synthase/homocitrate synthase family. LeuA type 1 subfamily. As to quaternary structure, homodimer. The cofactor is Mn(2+).

Its subcellular location is the cytoplasm. It catalyses the reaction 3-methyl-2-oxobutanoate + acetyl-CoA + H2O = (2S)-2-isopropylmalate + CoA + H(+). Its pathway is amino-acid biosynthesis; L-leucine biosynthesis; L-leucine from 3-methyl-2-oxobutanoate: step 1/4. Functionally, catalyzes the condensation of the acetyl group of acetyl-CoA with 3-methyl-2-oxobutanoate (2-ketoisovalerate) to form 3-carboxy-3-hydroxy-4-methylpentanoate (2-isopropylmalate). This chain is 2-isopropylmalate synthase, found in Caulobacter vibrioides (strain ATCC 19089 / CIP 103742 / CB 15) (Caulobacter crescentus).